The primary structure comprises 218 residues: Adenylate kinase (218 aa).

Residue 10–15 (GAGKGT) participates in ATP binding. The NMP stretch occupies residues 30 to 59 (STGDMLRAAVKAGTPLGIEAKKVMDSGGLV). Residues threonine 31, arginine 36, 57-59 (GLV), 85-88 (GFPR), and glutamine 92 contribute to the AMP site. Residues 122–159 (GRRSHSASGRTYHVKYNPPKVEGLDDVTGEPLIQREDD) are LID. Residues arginine 123 and 132–133 (TY) each bind ATP. Residues arginine 156 and arginine 167 each coordinate AMP. Position 203 (glycine 203) interacts with ATP.

It belongs to the adenylate kinase family. Monomer.

It localises to the cytoplasm. It catalyses the reaction AMP + ATP = 2 ADP. It functions in the pathway purine metabolism; AMP biosynthesis via salvage pathway; AMP from ADP: step 1/1. In terms of biological role, catalyzes the reversible transfer of the terminal phosphate group between ATP and AMP. Plays an important role in cellular energy homeostasis and in adenine nucleotide metabolism. The sequence is that of Adenylate kinase from Polaromonas naphthalenivorans (strain CJ2).